Consider the following 956-residue polypeptide: DNA replication helicase (956 aa).

Gly-120–Thr-127 is an ATP binding site. Residues Pro-658 to Ser-694 form a disordered region. The segment covering Ser-667–Gln-678 has biased composition (low complexity). Basic and acidic residues predominate over residues Arg-679–Ser-694.

The protein belongs to the herpesviridae helicase family. Associates with the primase and the primase-associated factor to form the helicase-primase complex.

The protein localises to the host nucleus. Its function is as follows. Component of the helicase/primase complex. Unwinds the DNA at the replication forks and generates single-stranded DNA for both leading and lagging strand synthesis. The primase synthesizes short RNA primers on the lagging strand that the polymerase elongates using dNTPs. Possesses helicase-like motifs and therefore may act as the helicase subunit of the complex. The protein is DNA replication helicase of Human cytomegalovirus (strain AD169) (HHV-5).